Consider the following 301-residue polypeptide: Probable alpha-L-glutamate ligase (301 aa).

Residues leucine 104–glutamate 287 enclose the ATP-grasp domain. Residues lysine 141, glutamate 178–tyrosine 179, aspartate 187, and arginine 211–asparagine 213 each bind ATP. Mg(2+)-binding residues include aspartate 248, glutamate 260, and asparagine 262. Aspartate 248, glutamate 260, and asparagine 262 together coordinate Mn(2+).

It belongs to the RimK family. It depends on Mg(2+) as a cofactor. Requires Mn(2+) as cofactor.

This is Probable alpha-L-glutamate ligase from Marinomonas sp. (strain MWYL1).